A 156-amino-acid chain; its full sequence is Regulatory protein RecX (156 aa).

It belongs to the RecX family.

Its subcellular location is the cytoplasm. Functionally, modulates RecA activity. In Pseudomonas putida (strain W619), this protein is Regulatory protein RecX.